A 78-amino-acid chain; its full sequence is Large ribosomal subunit protein bL28 (78 aa).

Residues 1–21 form a disordered region; the sequence is MSRVCQVTGKSPITGNNVSHA. A compositionally biased stretch (polar residues) spans 8–21; it reads TGKSPITGNNVSHA.

Belongs to the bacterial ribosomal protein bL28 family.

This Hahella chejuensis (strain KCTC 2396) protein is Large ribosomal subunit protein bL28.